A 92-amino-acid polypeptide reads, in one-letter code: Small ribosomal subunit protein uS19 (92 aa).

The protein belongs to the universal ribosomal protein uS19 family.

In terms of biological role, protein S19 forms a complex with S13 that binds strongly to the 16S ribosomal RNA. This is Small ribosomal subunit protein uS19 from Borrelia duttonii (strain Ly).